The chain runs to 1028 residues: MMFPWKQLILLSFIGCLGGELLLQGPVFIKEPSNSIFPVGSEDKKITLHCEARGNPSPHYRWQLNGSDIDMSMEHRYKLNGGNLVVINPNRNWDTGTYQCFATNSLGTIVSREAKLQFAYLENFKTKMRSTVSVREGQGVVLLCGPPPHSGELSYAWIFNEYPSFVEEDSRRFVSQETGHLYISKVEPSDVGNYTCVVTSMVTNARVLGSPTPLVLRSDGVMGEYEPKIEVQFPETLPAAKGSTVKLECFALGNPIPQINWRRSDGLPFSSKIKLRKFSGVLEIPNFQQEDAGSYECIAENSRGKNVARGRLTYYAKPHWVQLIKDVEIAVEDSLYWECRASGKPKPSYRWLKNGAALVLEERTQIENGALTISNLSVTDSGMFQCIAENKHGLVYSSAELKVVASAPDFSKNPMKKLVQVQVGSLVSLDCKPRASPRALSSWKKGDVSVQEHERISLLNDGGLKIANVTKADAGTYTCMAENQFGKANGTTHLVVTEPTRITLAPSNMDVSVGESVILPCQVQHDPLLDIIFTWYFNGALADFKKDGSHFEKVGGSSSGDLMIRNIQLKHSGKYVCMVQTGVDSVSSAADLIVRGSPGPPENVKVDEITDTTAQLSWKEGKDNHSPVISYSIQARTPFSVGWQTVTTVPEVIDGKTHTATVVELNPWVEYEFRVVASNKIGGGEPSLPSEKVRTEEAVPEVPPSEVNGGGGSRSELVITWDPVPEELQNGEGFGYVVAFRPLGVTTWIQTVVTSPDTPRYVFRNESIVPYSPYEVKVGVYNNKGEGPFSPVTTVFSAEEEPTVAPSQVSANSLSSSEIEVSWNTIPWKLSNGHLLGYEVRYWNGGGKEESSSKMKVAGNETSARLRGLKSNLAYYTAVRAYNSAGAGPFSATVNVTTKKTPPSQPPGNVVWNATDTKVLLNWEQVKAMENESEVTGYKVFYRTSSQNNVQVLNTNKTSAELVLPIKEDYIIEVKATTDGGDGTSSEQIRIPRITSMDARGSTSAISNVHPMSSYMPIVLFLIVYVLW.

A signal peptide spans M1–G19. 6 consecutive Ig-like C2-type domains span residues P26 to Q117, E122 to L208, P227 to T313, P318 to K402, P408 to T497, and P499 to I593. 5 cysteine pairs are disulfide-bonded: C50–C100, C144–C196, C249–C297, C339–C386, and C431–C479. N-linked (GlcNAc...) asparagine glycans are attached at residues N65 and N193. Residues N375, N468, and N489 are each glycosylated (N-linked (GlcNAc...) asparagine). The cysteines at positions 521 and 577 are disulfide-linked. 4 consecutive Fibronectin type-III domains span residues P600–A698, P703–E800, A805–T901, and P902–D998. The tract at residues G684–S713 is disordered. N765, N860, N895, N913, N931, and N956 each carry an N-linked (GlcNAc...) asparagine glycan. The GPI-anchor amidated serine moiety is linked to residue S1002. The propeptide at T1003–W1028 is removed in mature form.

The protein belongs to the immunoglobulin superfamily. Contactin family. As to quaternary structure, interacts with PTPRG. In terms of tissue distribution, in brain, it is expressed in frontal lobe, occipital lobe, cerebellum and amygdala.

Its subcellular location is the cell membrane. Functionally, contactins mediate cell surface interactions during nervous system development. Has some neurite outgrowth-promoting activity. The chain is Contactin-3 (CNTN3) from Homo sapiens (Human).